Consider the following 338-residue polypeptide: Probable replication factor C subunit 2 (338 aa).

G60–T67 contacts ATP.

Belongs to the activator 1 small subunits family. In terms of assembly, heteropentamer of various rfc subunits that forms a complex (RFC) with PCNA in the presence of ATP.

It is found in the nucleus. In terms of biological role, the elongation of primed DNA templates by DNA polymerase delta and epsilon requires the action of the accessory proteins PCNA and activator 1. This is Probable replication factor C subunit 2 (rfc2) from Dictyostelium discoideum (Social amoeba).